Consider the following 440-residue polypeptide: Phosphatidylcholine-sterol acyltransferase (440 aa).

The first 24 residues, 1–24 (MGPPGSPWQWVPLLLGLLLPPAAP), serve as a signal peptide directing secretion. N-linked (GlcNAc...) asparagine glycosylation occurs at Asn44. A disulfide bond links Cys74 and Cys98. An N-linked (GlcNAc...) asparagine glycan is attached at Asn108. The Nucleophile role is filled by Ser205. A glycan (N-linked (GlcNAc...) asparagine) is linked at Asn296. A disulfide bond links Cys337 and Cys380. Catalysis depends on charge relay system residues Asp369 and His401. A glycan (N-linked (GlcNAc...) asparagine) is linked at Asn408.

The protein belongs to the AB hydrolase superfamily. Lipase family. In terms of tissue distribution, most abundant in liver and cerebellum.

It localises to the secreted. It catalyses the reaction a sterol + a 1,2-diacyl-sn-glycero-3-phosphocholine = a sterol ester + a 1-acyl-sn-glycero-3-phosphocholine. With respect to regulation, APOA1 is the most potent activator in plasma. Also activated by APOE, APOC1 and APOA4. Central enzyme in the extracellular metabolism of plasma lipoproteins. Synthesized mainly in the liver and secreted into plasma where it converts cholesterol and phosphatidylcholines (lecithins) to cholesteryl esters and lysophosphatidylcholines on the surface of high and low density lipoproteins (HDLs and LDLs). The cholesterol ester is then transported back to the liver. Has a preference for plasma 16:0-18:2 or 18:O-18:2 phosphatidylcholines. Also produced in the brain by primary astrocytes, and esterifies free cholesterol on nascent APOE-containing lipoproteins secreted from glia and influences cerebral spinal fluid (CSF) APOE- and APOA1 levels. Together with APOE and the cholesterol transporter ABCA1, plays a key role in the maturation of glial-derived, nascent lipoproteins. Required for remodeling high-density lipoprotein particles into their spherical forms. The polypeptide is Phosphatidylcholine-sterol acyltransferase (LCAT) (Papio anubis (Olive baboon)).